Here is a 542-residue protein sequence, read N- to C-terminus: MSRRGSILHSRTQWLLLGLALLFSLVLFMYLLECAPQTDGNASLPGVVRENYGKEYYQALLQEQEEHYQTRATSLKRQIAQLKQELQDMSEKMRALQERKKLGANGVGYPGNREQAPSDLLEFLHSQIDRAEVSVGAKLPSEYGVVPFESFTLMKVFQLEMGLTRHPEEKPVRKDKRDELVEVIEAGVEVINNPDEDDAQEDEEGPLGEKLIFNENDFIEGYYRTERDKGTQYELFFKKADLMEYRHVTLFRPFGPLMKVKNELIDITRSVINIIVPLAERTEAFSQFMQNFRDVCIHQDKRIHLTVVYFGKEGLSKVKSILESVSSESDFHNYTLVSLDEEFNRGRGLNVGARAWDKGEVLMFFCDVDIYFSAEFLNSCRLNAEPGKKVFYPVVFSLYNPAIVYANQDVPPPVEQQLVHKKDSGFWRDFGFGMTCQYQSDFLSVGGFDMEVKGWGGEDVHLYRKYLHGDLIVIRTPVPGLFHLWHEKHCADELTPEQYRMCIQSKAMNEASHSHLGMMVFREEIEMHLRKQAYRTNSETAG.

Residues 1 to 13 lie on the Cytoplasmic side of the membrane; that stretch reads MSRRGSILHSRTQ. Residues 14–34 form a helical; Signal-anchor for type II membrane protein membrane-spanning segment; that stretch reads WLLLGLALLFSLVLFMYLLEC. Topologically, residues 35-542 are lumenal; sequence APQTDGNASL…AYRTNSETAG (508 aa). N-linked (GlcNAc...) asparagine glycosylation occurs at Asn41. Residues 59–105 adopt a coiled-coil conformation; the sequence is ALLQEQEEHYQTRATSLKRQIAQLKQELQDMSEKMRALQERKKLGAN. Asn333 is a glycosylation site (N-linked (GlcNAc...) asparagine). Residues Asp369 and His486 each coordinate a divalent metal cation.

Belongs to the chondroitin N-acetylgalactosaminyltransferase family.

Its subcellular location is the golgi apparatus. The protein localises to the golgi stack membrane. It carries out the reaction 3-O-(beta-D-GlcA-(1-&gt;3)-beta-D-Gal-(1-&gt;3)-beta-D-Gal-(1-&gt;4)-beta-D-Xyl)-L-seryl-[protein] + UDP-N-acetyl-alpha-D-galactosamine = 3-O-(beta-D-GalNAc-(1-&gt;4)-beta-D-GlcA-(1-&gt;3)-beta-D-Gal-(1-&gt;3)-beta-D-Gal-(1-&gt;4)-beta-D-Xyl)-L-seryl-[protein] + UDP + H(+). In terms of biological role, transfers 1,4-N-acetylgalactosamine (GalNAc) from UDP-GalNAc to the non-reducing end of glucuronic acid (GlcUA). Required for addition of the first GalNAc to the core tetrasaccharide linker and for elongation of chondroitin chains. The sequence is that of Chondroitin sulfate N-acetylgalactosaminyltransferase 2 (Csgalnact2) from Mus musculus (Mouse).